We begin with the raw amino-acid sequence, 285 residues long: Biotin synthase (285 aa).

The region spanning 2-223 (STRKQIFLCA…RRAHTLLGED (222 aa)) is the Radical SAM core domain. [4Fe-4S] cluster contacts are provided by Cys20, Cys24, and Cys27. 3 residues coordinate [2Fe-2S] cluster: Cys64, Cys99, and Cys157.

The protein belongs to the radical SAM superfamily. Biotin synthase family. Homodimer. [4Fe-4S] cluster is required as a cofactor. It depends on [2Fe-2S] cluster as a cofactor.

The enzyme catalyses (4R,5S)-dethiobiotin + (sulfur carrier)-SH + 2 reduced [2Fe-2S]-[ferredoxin] + 2 S-adenosyl-L-methionine = (sulfur carrier)-H + biotin + 2 5'-deoxyadenosine + 2 L-methionine + 2 oxidized [2Fe-2S]-[ferredoxin]. The protein operates within cofactor biosynthesis; biotin biosynthesis; biotin from 7,8-diaminononanoate: step 2/2. Functionally, catalyzes the conversion of dethiobiotin (DTB) to biotin by the insertion of a sulfur atom into dethiobiotin via a radical-based mechanism. The polypeptide is Biotin synthase (Sulfurovum sp. (strain NBC37-1)).